Here is a 101-residue protein sequence, read N- to C-terminus: NADH-quinone oxidoreductase subunit K (101 aa).

Helical transmembrane passes span 4-24 (LAHY…GIFL), 30-50 (IVLL…FVAF), and 61-81 (VFVF…LAIL).

Belongs to the complex I subunit 4L family. As to quaternary structure, NDH-1 is composed of 14 different subunits. Subunits NuoA, H, J, K, L, M, N constitute the membrane sector of the complex.

The protein resides in the cell inner membrane. It catalyses the reaction a quinone + NADH + 5 H(+)(in) = a quinol + NAD(+) + 4 H(+)(out). NDH-1 shuttles electrons from NADH, via FMN and iron-sulfur (Fe-S) centers, to quinones in the respiratory chain. The immediate electron acceptor for the enzyme in this species is believed to be ubiquinone. Couples the redox reaction to proton translocation (for every two electrons transferred, four hydrogen ions are translocated across the cytoplasmic membrane), and thus conserves the redox energy in a proton gradient. This chain is NADH-quinone oxidoreductase subunit K, found in Ralstonia nicotianae (strain ATCC BAA-1114 / GMI1000) (Ralstonia solanacearum).